We begin with the raw amino-acid sequence, 136 residues long: Calmodulin-A (136 aa).

4 EF-hand domains span residues 1 to 36 (EQIA…LGQN), 37 to 72 (PTEA…KMKD), 74 to 109 (DSEE…LGEK), and 110 to 136 (LTDE…EEFV). 15 residues coordinate Ca(2+): Asp14, Asp16, Asp18, Thr20, Glu25, Asp50, Asp52, Asn54, Thr56, Glu61, Asp87, Asp89, Asn91, Tyr93, and Glu98. Lys109 carries the N6,N6,N6-trimethyllysine modification. Positions 123, 125, 127, 129, and 134 each coordinate Ca(2+).

It belongs to the calmodulin family.

Functionally, calmodulin acts as part of a calcium signal transduction pathway by mediating the control of a large number of enzymes, ion channels, aquaporins and other proteins through calcium-binding. Calcium-binding is required for the activation of calmodulin. Among the enzymes to be stimulated by the calmodulin-calcium complex are a number of protein kinases, such as myosin light-chain kinases and calmodulin-dependent protein kinase type II (CaMK2), and phosphatases. The polypeptide is Calmodulin-A (calm1) (Oryzias latipes (Japanese rice fish)).